We begin with the raw amino-acid sequence, 314 residues long: Nodulation protein D 1 (314 aa).

In terms of domain architecture, HTH lysR-type spans 6 to 63; it reads LDLNLLVVLDALLTERTLTAAASSINLSQPAMSAAVARLRDYFNDELFTTSGRERVLT. Positions 23–42 form a DNA-binding region, H-T-H motif; the sequence is LTAAASSINLSQPAMSAAVA.

This sequence belongs to the LysR transcriptional regulatory family.

NodD regulates the expression of the nodABCFE genes which encode other nodulation proteins. NodD is also a negative regulator of its own expression. Binds flavenoids as inducers. This chain is Nodulation protein D 1 (nodD1), found in Mesorhizobium japonicum (strain LMG 29417 / CECT 9101 / MAFF 303099) (Mesorhizobium loti (strain MAFF 303099)).